The following is a 261-amino-acid chain: Cytochrome c oxidase subunit 3 (261 aa).

The Mitochondrial matrix segment spans residues 1 to 15 (MSHQAHAYHMVDPSP). Residues 16 to 34 (WPLTGAGAALLMTSGLAMW) form a helical membrane-spanning segment. Residues 35–40 (FHKNSC) are Mitochondrial intermembrane-facing. A helical membrane pass occupies residues 41-66 (ILMTLGLILMLLTMYQWWRDIVREGT). Over 67 to 72 (FLGHHT) the chain is Mitochondrial matrix. Residues 73–105 (SPVQQGLRYGMILFIISEVCFFAGFFWAFYHAS) form a helical membrane-spanning segment. The Mitochondrial intermembrane portion of the chain corresponds to 106–128 (LAPTPELGLTWPPTGINPLNPFE). Residues 129–152 (VPLLNTAVLLASGVSVTWAHHSIT) form a helical membrane-spanning segment. At 153–155 (EKN) the chain is on the mitochondrial matrix side. Residues 156–183 (RTETTQALTLTVLLGLYFTALQIMEYYE) form a helical membrane-spanning segment. Over 184–190 (TPFTMAD) the chain is Mitochondrial intermembrane. The helical transmembrane segment at 191-223 (GVYGSTFFVATGFHGLHVIIGSLFLLTCLLRHL) threads the bilayer. Over 224 to 232 (QYHFTSKHH) the chain is Mitochondrial matrix. A helical membrane pass occupies residues 233–256 (FGFEAAAWYWHFVDVVWLFLYISI). Over 257 to 261 (YWWGS) the chain is Mitochondrial intermembrane.

Belongs to the cytochrome c oxidase subunit 3 family. Component of the cytochrome c oxidase (complex IV, CIV), a multisubunit enzyme composed of 14 subunits. The complex is composed of a catalytic core of 3 subunits MT-CO1, MT-CO2 and MT-CO3, encoded in the mitochondrial DNA, and 11 supernumerary subunits COX4I, COX5A, COX5B, COX6A, COX6B, COX6C, COX7A, COX7B, COX7C, COX8 and NDUFA4, which are encoded in the nuclear genome. The complex exists as a monomer or a dimer and forms supercomplexes (SCs) in the inner mitochondrial membrane with NADH-ubiquinone oxidoreductase (complex I, CI) and ubiquinol-cytochrome c oxidoreductase (cytochrome b-c1 complex, complex III, CIII), resulting in different assemblies (supercomplex SCI(1)III(2)IV(1) and megacomplex MCI(2)III(2)IV(2)).

It is found in the mitochondrion inner membrane. It carries out the reaction 4 Fe(II)-[cytochrome c] + O2 + 8 H(+)(in) = 4 Fe(III)-[cytochrome c] + 2 H2O + 4 H(+)(out). Its function is as follows. Component of the cytochrome c oxidase, the last enzyme in the mitochondrial electron transport chain which drives oxidative phosphorylation. The respiratory chain contains 3 multisubunit complexes succinate dehydrogenase (complex II, CII), ubiquinol-cytochrome c oxidoreductase (cytochrome b-c1 complex, complex III, CIII) and cytochrome c oxidase (complex IV, CIV), that cooperate to transfer electrons derived from NADH and succinate to molecular oxygen, creating an electrochemical gradient over the inner membrane that drives transmembrane transport and the ATP synthase. Cytochrome c oxidase is the component of the respiratory chain that catalyzes the reduction of oxygen to water. Electrons originating from reduced cytochrome c in the intermembrane space (IMS) are transferred via the dinuclear copper A center (CU(A)) of subunit 2 and heme A of subunit 1 to the active site in subunit 1, a binuclear center (BNC) formed by heme A3 and copper B (CU(B)). The BNC reduces molecular oxygen to 2 water molecules using 4 electrons from cytochrome c in the IMS and 4 protons from the mitochondrial matrix. This is Cytochrome c oxidase subunit 3 (MT-CO3) from Petromyzon marinus (Sea lamprey).